Here is a 296-residue protein sequence, read N- to C-terminus: Glycine N-acyltransferase (296 aa).

Lysine 16 is modified (N6-acetyllysine; alternate). Lysine 16 is modified (N6-succinyllysine; alternate). The residue at position 113 (lysine 113) is an N6-acetyllysine. 3 positions are modified to N6-acetyllysine; alternate: lysine 127, lysine 141, and lysine 142. An N6-succinyllysine; alternate mark is found at lysine 127, lysine 141, and lysine 142. N6-acetyllysine is present on residues lysine 159 and lysine 167. N6-succinyllysine is present on lysine 169. Residues lysine 183 and lysine 256 each carry the N6-acetyllysine; alternate modification. 2 positions are modified to N6-succinyllysine; alternate: lysine 183 and lysine 256. Position 267 is an N6-succinyllysine (lysine 267).

The protein belongs to the glycine N-acyltransferase family.

The protein resides in the mitochondrion. The catalysed reaction is an acyl-CoA + glycine = an N-acylglycine + CoA + H(+). It carries out the reaction benzoyl-CoA + glycine = N-benzoylglycine + CoA + H(+). Functionally, mitochondrial acyltransferase which transfers an acyl group to the N-terminus of glycine and glutamine, although much less efficiently. Can conjugate a multitude of substrates to form a variety of N-acylglycines, thereby detoxify xenobiotics, such as benzoic acid or salicylic acid, and endogenous organic acids, such as isovaleric acid. The sequence is that of Glycine N-acyltransferase (Glyat) from Mus musculus (Mouse).